A 170-amino-acid chain; its full sequence is NAD(P)H-quinone oxidoreductase subunit I, chloroplastic (170 aa).

2 4Fe-4S ferredoxin-type domains span residues 55–84 (GRIHFEFDKCIACEVCVRACPIDLPVVDWK) and 95–124 (LNYSIDFGICIFCGNCVEYCPTNCLSMTEE). [4Fe-4S] cluster is bound by residues Cys64, Cys67, Cys70, Cys74, Cys104, Cys107, Cys110, and Cys114.

It belongs to the complex I 23 kDa subunit family. In terms of assembly, NDH is composed of at least 16 different subunits, 5 of which are encoded in the nucleus. [4Fe-4S] cluster serves as cofactor.

It is found in the plastid. Its subcellular location is the chloroplast thylakoid membrane. The enzyme catalyses a plastoquinone + NADH + (n+1) H(+)(in) = a plastoquinol + NAD(+) + n H(+)(out). The catalysed reaction is a plastoquinone + NADPH + (n+1) H(+)(in) = a plastoquinol + NADP(+) + n H(+)(out). Its function is as follows. NDH shuttles electrons from NAD(P)H:plastoquinone, via FMN and iron-sulfur (Fe-S) centers, to quinones in the photosynthetic chain and possibly in a chloroplast respiratory chain. The immediate electron acceptor for the enzyme in this species is believed to be plastoquinone. Couples the redox reaction to proton translocation, and thus conserves the redox energy in a proton gradient. The chain is NAD(P)H-quinone oxidoreductase subunit I, chloroplastic from Spinacia oleracea (Spinach).